The sequence spans 525 residues: Acetyl-CoA hydrolase (525 aa).

A CoA-binding site is contributed by 280–284 (GIGNI). Residue Glu-305 is the 5-glutamyl coenzyme A thioester intermediate of the active site. Positions 395 and 399 each coordinate CoA.

It belongs to the acetyl-CoA hydrolase/transferase family.

Its subcellular location is the cytoplasm. The catalysed reaction is acetyl-CoA + H2O = acetate + CoA + H(+). Required for utilization of acetate. The chain is Acetyl-CoA hydrolase (acu-8) from Neurospora crassa (strain ATCC 24698 / 74-OR23-1A / CBS 708.71 / DSM 1257 / FGSC 987).